We begin with the raw amino-acid sequence, 203 residues long: Thymidylate kinase (203 aa).

9–16 is an ATP binding site; the sequence is GPEGSGKT.

The protein belongs to the thymidylate kinase family.

It catalyses the reaction dTMP + ATP = dTDP + ADP. Phosphorylation of dTMP to form dTDP in both de novo and salvage pathways of dTTP synthesis. This is Thymidylate kinase from Staphylococcus haemolyticus (strain JCSC1435).